The sequence spans 1014 residues: Probable transport protein MmpL11 (1014 aa).

Transmembrane regions (helical) follow at residues 13–33 (WLVFTGWLLALVPAIYLAMTQ), 156–173 (VRLYVIGQGALSAAVAAN), 188–208 (IILIVLLAVFGSLAAAAVPLA), 235–255 (TSTVSMFGIALAVDYSLFILM), 279–299 (GLAVVLSGMTVIASLTGIYLI), 311–331 (AILAVAIAMLASITLTPAALA), 373–393 (ASAASTILIIMATPVTSMMLG), 530–550 (TEPLMLVFVALIAFVMLLISI), 560–580 (VLMTLLSVAAAYGSLVMVFQW), 598–618 (VPPLVLAMTFGLSMDYEIFLL), 649–669 (AALIMIAVFVGFAFAGMPLVA), and 671–691 (IGVACAVAIAVDVTAVRLVLV). The disordered stretch occupies residues 783–802 (SDRVLPGAATQESEEDPAMG).

The protein belongs to the resistance-nodulation-cell division (RND) (TC 2.A.6) family. MmpL subfamily.

The protein localises to the cell membrane. This is Probable transport protein MmpL11 (mmpL11) from Mycobacterium leprae (strain TN).